We begin with the raw amino-acid sequence, 38 residues long: Natriuretic peptide DNP (38 aa).

A disulfide bond links cysteine 7 and cysteine 23. The interval 19–38 (SNLGCPSLRDPRPNAPSTSA) is disordered.

This sequence belongs to the natriuretic peptide family. In terms of tissue distribution, expressed by the venom gland.

It localises to the secreted. Its function is as follows. Exhibits vasodilator, natriuretic and diuretic properties in animal models and human tissues. Acts by stimulating cGMP via the natriuretic peptide receptor 1 (NPR1). Is a poor agonist of the atrial natriuretic peptide receptor 2 (NPR2). Is not degraded by neutral endopeptidase (NEP/MME). Binds to atrial natriuretic peptide clearance receptor (NPR-C/NPR3), which may be responsible of the removal of DNP from the circulation. Increases calcium uptake and induces histamine release from rat peritoneal mast cells. Increases calcium-activated potassium (KCa) current in gastric antral circular smooth muscle cells by increasing cGMP production and activating inositol trisphosphate receptors (IP3Rs). In vivo, reduces both systolic and diastolic blood pressure with no effect on heart rate, when intravenously injected in conscious rabbits. In Dendroaspis angusticeps (Eastern green mamba), this protein is Natriuretic peptide DNP.